Reading from the N-terminus, the 118-residue chain is UPF0344 protein RBAM_010920 (118 aa).

The next 4 helical transmembrane spans lie at 4 to 24 (WHITSWVVALILVFVSYGLYG), 33 to 53 (ITHMILRLFYIIIILTGAELF), 62 to 82 (EYAGKMLLGIITIGLMEMLVI), and 93 to 113 (LWIGFIIVLVLTVLLGLHLPI).

The protein belongs to the UPF0344 family.

The protein resides in the cell membrane. This is UPF0344 protein RBAM_010920 from Bacillus velezensis (strain DSM 23117 / BGSC 10A6 / LMG 26770 / FZB42) (Bacillus amyloliquefaciens subsp. plantarum).